Consider the following 322-residue polypeptide: Cytochrome c biogenesis protein CcsA (322 aa).

8 helical membrane-spanning segments follow: residues 9 to 29, 44 to 64, 71 to 91, 98 to 118, 143 to 163, 226 to 246, 253 to 273, and 287 to 307; these read ILTH…LITL, GMIA…IYSG, LYES…VPYF, LTTI…SGLL, MILS…LLVI, VISL…VWAN, WSWD…AIYL, and AIVA…VNLL.

The protein belongs to the CcmF/CycK/Ccl1/NrfE/CcsA family. As to quaternary structure, may interact with Ccs1.

It is found in the plastid. The protein localises to the chloroplast thylakoid membrane. Required during biogenesis of c-type cytochromes (cytochrome c6 and cytochrome f) at the step of heme attachment. The chain is Cytochrome c biogenesis protein CcsA from Guizotia abyssinica (Niger).